We begin with the raw amino-acid sequence, 64 residues long: Conotoxin Ts-011 (64 aa).

The first 22 residues, 1–22 (MHCLPVLVILLLLIASTPSVDA), serve as a signal peptide directing secretion. The propeptide occupies 23–52 (RPKTKDDVPPASFHGADDANRILQTLWNLR). Ile63 bears the Isoleucine amide mark.

Belongs to the conotoxin T superfamily. Contains 2 disulfide bonds that can be either 'C1-C3, C2-C4' or 'C1-C4, C2-C3', since these disulfide connectivities have been observed for conotoxins with cysteine framework V (for examples, see AC P0DQQ7 and AC P81755). In terms of tissue distribution, expressed by the venom duct.

The protein localises to the secreted. This chain is Conotoxin Ts-011, found in Conus tessulatus (Tessellate cone).